Reading from the N-terminus, the 385-residue chain is 8-amino-7-oxononanoate synthase (385 aa).

Arginine 21 lines the substrate pocket. 108–109 (GF) contributes to the pyridoxal 5'-phosphate binding site. Histidine 133 lines the substrate pocket. The pyridoxal 5'-phosphate site is built by serine 179, histidine 207, and threonine 233. At lysine 236 the chain carries N6-(pyridoxal phosphate)lysine. Threonine 352 serves as a coordination point for substrate.

This sequence belongs to the class-II pyridoxal-phosphate-dependent aminotransferase family. BioF subfamily. As to quaternary structure, homodimer. Pyridoxal 5'-phosphate is required as a cofactor.

The enzyme catalyses 6-carboxyhexanoyl-[ACP] + L-alanine + H(+) = (8S)-8-amino-7-oxononanoate + holo-[ACP] + CO2. It functions in the pathway cofactor biosynthesis; biotin biosynthesis. In terms of biological role, catalyzes the decarboxylative condensation of pimeloyl-[acyl-carrier protein] and L-alanine to produce 8-amino-7-oxononanoate (AON), [acyl-carrier protein], and carbon dioxide. This is 8-amino-7-oxononanoate synthase from Salmonella choleraesuis (strain SC-B67).